The primary structure comprises 339 residues: Ketol-acid reductoisomerase (NADP(+)) (339 aa).

Positions 1 to 182 constitute a KARI N-terminal Rossmann domain; that stretch reads MRVYYDRDAD…GGGRSGIIET (182 aa). NADP(+) is bound by residues 24–27, lysine 48, serine 51, threonine 53, and 83–86; these read YGSQ and DELQ. Residue histidine 108 is part of the active site. NADP(+) is bound at residue glycine 134. Residues 183 to 328 form the KARI C-terminal knotted domain; it reads TFQEECETDL…AKLRGMMPWI (146 aa). Mg(2+)-binding residues include aspartate 191, glutamate 195, glutamate 227, and glutamate 231. Serine 252 serves as a coordination point for substrate.

Belongs to the ketol-acid reductoisomerase family. Requires Mg(2+) as cofactor.

The enzyme catalyses (2R)-2,3-dihydroxy-3-methylbutanoate + NADP(+) = (2S)-2-acetolactate + NADPH + H(+). It catalyses the reaction (2R,3R)-2,3-dihydroxy-3-methylpentanoate + NADP(+) = (S)-2-ethyl-2-hydroxy-3-oxobutanoate + NADPH + H(+). It functions in the pathway amino-acid biosynthesis; L-isoleucine biosynthesis; L-isoleucine from 2-oxobutanoate: step 2/4. Its pathway is amino-acid biosynthesis; L-valine biosynthesis; L-valine from pyruvate: step 2/4. In terms of biological role, involved in the biosynthesis of branched-chain amino acids (BCAA). Catalyzes an alkyl-migration followed by a ketol-acid reduction of (S)-2-acetolactate (S2AL) to yield (R)-2,3-dihydroxy-isovalerate. In the isomerase reaction, S2AL is rearranged via a Mg-dependent methyl migration to produce 3-hydroxy-3-methyl-2-ketobutyrate (HMKB). In the reductase reaction, this 2-ketoacid undergoes a metal-dependent reduction by NADPH to yield (R)-2,3-dihydroxy-isovalerate. The polypeptide is Ketol-acid reductoisomerase (NADP(+)) (Allorhizobium ampelinum (strain ATCC BAA-846 / DSM 112012 / S4) (Agrobacterium vitis (strain S4))).